Consider the following 497-residue polypeptide: Probable cytosol aminopeptidase (497 aa).

Mn(2+) contacts are provided by Lys-267 and Asp-272. The active site involves Lys-279. Mn(2+)-binding residues include Asp-290, Asp-349, and Glu-351. Arg-353 is an active-site residue.

It belongs to the peptidase M17 family. Mn(2+) is required as a cofactor.

It is found in the cytoplasm. The enzyme catalyses Release of an N-terminal amino acid, Xaa-|-Yaa-, in which Xaa is preferably Leu, but may be other amino acids including Pro although not Arg or Lys, and Yaa may be Pro. Amino acid amides and methyl esters are also readily hydrolyzed, but rates on arylamides are exceedingly low.. The catalysed reaction is Release of an N-terminal amino acid, preferentially leucine, but not glutamic or aspartic acids.. Its function is as follows. Presumably involved in the processing and regular turnover of intracellular proteins. Catalyzes the removal of unsubstituted N-terminal amino acids from various peptides. This chain is Probable cytosol aminopeptidase, found in Syntrophotalea carbinolica (strain DSM 2380 / NBRC 103641 / GraBd1) (Pelobacter carbinolicus).